We begin with the raw amino-acid sequence, 353 residues long: Stearoyl-CoA desaturase 4 (353 aa).

The tract at residues 1–42 (MTAHLPQEISSRCSTTNIMEPHSRRQQDGEEKMPLQAEDIRP) is disordered. The Cytoplasmic segment spans residues 1-66 (MTAHLPQEIS…EGPPPKLEYV (66 aa)). Polar residues predominate over residues 8–18 (EISSRCSTTNI). Over residues 21-42 (PHSRRQQDGEEKMPLQAEDIRP) the composition is skewed to basic and acidic residues. The helical transmembrane segment at 67-87 (WRNIIFMALLHVGALYGITLV) threads the bilayer. Residue asparagine 69 coordinates substrate. Over 88-91 (PSCK) the chain is Lumenal. The chain crosses the membrane as a helical span at residues 92–112 (VYTWLLGVFYNVVAGLGITAG). The Cytoplasmic segment spans residues 113 to 211 (AHRLWSHRTY…EKLVMFQRRY (99 aa)). Fe cation contacts are provided by histidine 114 and histidine 119. Residues 114–119 (HRLWSH) carry the Histidine box-1 motif. Residues asparagine 142, arginine 149, and aspartate 150 each contribute to the substrate site. Residues histidine 151, histidine 154, and histidine 155 each contribute to the Fe cation site. Residues 151-155 (HRAHH) carry the Histidine box-2 motif. Substrate-binding residues include arginine 182 and lysine 183. The chain crosses the membrane as a helical span at residues 212–231 (YKLAVTLMFIILPTLVPWYL). Over 232 to 235 (WGET) the chain is Lumenal. A helical transmembrane segment spans residues 236–257 (FQHSLCVSNFLRYAVLLNFTWL). Substrate is bound at residue tryptophan 256. Residues 258-353 (VNSAAHLYGY…RTGDGSHKSS (96 aa)) are Cytoplasmic-facing. Positions 263, 292, 295, and 296 each coordinate Fe cation. A Histidine box-3 motif is present at residues 292–296 (HNYHH).

It belongs to the fatty acid desaturase type 1 family. Fe(2+) serves as cofactor. Detected in heart, but not in brain, liver, skin or adipose tissue.

The protein localises to the endoplasmic reticulum membrane. Its subcellular location is the microsome membrane. It carries out the reaction octadecanoyl-CoA + 2 Fe(II)-[cytochrome b5] + O2 + 2 H(+) = (9Z)-octadecenoyl-CoA + 2 Fe(III)-[cytochrome b5] + 2 H2O. It catalyses the reaction hexadecanoyl-CoA + 2 Fe(II)-[cytochrome b5] + O2 + 2 H(+) = (9Z)-hexadecenoyl-CoA + 2 Fe(III)-[cytochrome b5] + 2 H2O. Stearoyl-CoA desaturase that utilizes O(2) and electrons from reduced cytochrome b5 to introduce the first double bond into saturated fatty acyl-CoA substrates. Catalyzes the insertion of a cis double bond at the delta-9 position into fatty acyl-CoA substrates including palmitoyl-CoA and stearoyl-CoA. Required for the biosynthesis of membrane phospholipids, cholesterol esters and triglycerides. This Mus musculus (Mouse) protein is Stearoyl-CoA desaturase 4.